Consider the following 159-residue polypeptide: Serine-protein kinase RsbW (159 aa).

Belongs to the anti-sigma-factor family.

It catalyses the reaction L-seryl-[protein] + ATP = O-phospho-L-seryl-[protein] + ADP + H(+). The catalysed reaction is L-threonyl-[protein] + ATP = O-phospho-L-threonyl-[protein] + ADP + H(+). Its function is as follows. Negative regulator of sigma-B activity. Phosphorylates and inactivates its specific antagonist protein, RsbV. Upon phosphorylation of RsbV, RsbW is released and binds to sigma-B, thereby blocking its ability to form an RNA polymerase holoenzyme (E-sigma-B). This is Serine-protein kinase RsbW from Staphylococcus aureus (strain MRSA252).